The sequence spans 20 residues: LLSTLTDTSIKEAVATDKAP.

The chain is Unknown protein from 2D-PAGE from Nicotiana tabacum (Common tobacco).